Here is a 130-residue protein sequence, read N- to C-terminus: Phosphoribosyl-AMP cyclohydrolase (130 aa).

Aspartate 77 contributes to the Mg(2+) binding site. Residue cysteine 78 coordinates Zn(2+). Mg(2+) is bound by residues aspartate 79 and aspartate 81. Positions 95 and 102 each coordinate Zn(2+).

The protein belongs to the PRA-CH family. In terms of assembly, homodimer. Mg(2+) serves as cofactor. Zn(2+) is required as a cofactor.

It localises to the cytoplasm. It catalyses the reaction 1-(5-phospho-beta-D-ribosyl)-5'-AMP + H2O = 1-(5-phospho-beta-D-ribosyl)-5-[(5-phospho-beta-D-ribosylamino)methylideneamino]imidazole-4-carboxamide. It participates in amino-acid biosynthesis; L-histidine biosynthesis; L-histidine from 5-phospho-alpha-D-ribose 1-diphosphate: step 3/9. Its function is as follows. Catalyzes the hydrolysis of the adenine ring of phosphoribosyl-AMP. The protein is Phosphoribosyl-AMP cyclohydrolase of Pseudomonas putida (strain ATCC 700007 / DSM 6899 / JCM 31910 / BCRC 17059 / LMG 24140 / F1).